We begin with the raw amino-acid sequence, 425 residues long: Acyl-lipid (8-3)-desaturase (425 aa).

The tract at residues 1-25 is disordered; sequence MPPRDSYSYAAPPSAQLHEVDTPQE. The Cytochrome b5 heme-binding domain maps to 18-93; sequence HEVDTPQEHD…SRPVHKGYSP (76 aa). Residues H47 and H69 each contribute to the heme site. The helical transmembrane segment at 134-154 threads the bilayer; that stretch reads VAGAALIWHGYTFAGIAMLGV. The Histidine box-1 motif lies at 164–168; sequence HEGGH. A helical transmembrane segment spans residues 175-197; sequence IAFDRAIQVACYGLGCGMSGAWW. The Histidine box-2 motif lies at 201-206; sequence HNKHHA. A run of 2 helical transmembrane segments spans residues 241–261 and 297–317; these read WLSMQAKLFAPVTTLLVALGW and GAGYVLACYLLYVQLGAMYIF. The short motif at 365-369 is the Histidine box-3 element; that stretch reads QIEHH.

Belongs to the fatty acid desaturase type 1 family. Requires Fe(2+) as cofactor.

It is found in the membrane. It catalyses the reaction an (8Z,11Z,14Z)-icosatrienoyl-containing glycerolipid + 2 Fe(II)-[cytochrome b5] + O2 + 2 H(+) = (5Z,8Z,11Z,14Z)-eicosatetraenoyl-containing glycerolipid + 2 Fe(III)-[cytochrome b5] + 2 H2O. The enzyme catalyses an (8Z,11Z,14Z,17Z)-eicosatetraenoyl-containing glycerolipid + 2 Fe(II)-[cytochrome b5] + O2 + 2 H(+) = a (5Z,8Z,11Z,14Z,17Z)-eicosapentaenoyl-containing glycerolipid + 2 Fe(III)-[cytochrome b5] + 2 H2O. Its function is as follows. Fatty acid desaturase that introduces a cis double bond at the 5-position in 20-carbon polyunsaturated fatty acids incorporated in a glycerolipid that contain a Delta(8) double bond. The polypeptide is Acyl-lipid (8-3)-desaturase (Rebecca salina (Marine microalga)).